Consider the following 2896-residue polypeptide: Protein PRRC2C (2896 aa).

Lys27 is subject to N6-acetyllysine. The tract at residues 28–212 is disordered; it reads GKSLETQKTT…STAGTSEQND (185 aa). Residues 88–97 are compositionally biased toward basic and acidic residues; the sequence is QEQHEEEKTP. The span at 105–119 shows a compositional bias: low complexity; it reads KPGVAAPPEVAPAPK. Polar residues predominate over residues 134-144; it reads QVNSQFQQEFP. Basic and acidic residues predominate over residues 151–160; that stretch reads DQEKKEKETN. Ser187 and Ser191 each carry phosphoserine. The span at 201–211 shows a compositional bias: polar residues; the sequence is DESTAGTSEQN. At Arg242 the chain carries Asymmetric dimethylarginine; alternate. The residue at position 242 (Arg242) is an Omega-N-methylarginine; alternate. 2 positions are modified to asymmetric dimethylarginine: Arg255 and Arg266. Disordered regions lie at residues 264–729 and 750–788; these read PMRF…QHLA and SGRP…SFEH. Arg279 and Arg281 each carry omega-N-methylarginine. The span at 301–310 shows a compositional bias: basic and acidic residues; the sequence is ELKELDKFDN. A Phosphoserine modification is found at Ser335. Residues 341 to 358 are compositionally biased toward polar residues; the sequence is GSNSPKENNSEDQGSKAS. Basic and acidic residues predominate over residues 359 to 368; that stretch reads ENNENKKETD. A compositionally biased stretch (polar residues) spans 370–381; sequence VSNTKSSSQIPA. Lys392 is subject to N6-acetyllysine. Residues Ser395 and Ser500 each carry the phosphoserine modification. The segment covering 395–405 has biased composition (polar residues); that stretch reads SFNQERGTSSH. The segment covering 465–648 has biased composition (basic and acidic residues); sequence RREEEERRME…EATPVVHETE (184 aa). Residues 676-708 are compositionally biased toward low complexity; sequence QRQQEQMKQQQWQQQQQQGVLPQTVPSQPSSST. Positions 759–769 are enriched in pro residues; sequence PIHPGMIPPKP. 3 positions are modified to phosphoserine: Ser779, Ser785, and Ser801. The interval 804–1118 is disordered; that stretch reads RMLWGSDPYP…PVSTVQVEPA (315 aa). Basic and acidic residues-rich tracts occupy residues 825–836, 852–867, and 878–888; these read ATEEPEDVRSEA, NQLE…RESS, and SVEDVRPHHTD. A phosphoserine mark is found at Ser867, Ser878, Ser920, and Ser929. 3 stretches are compositionally biased toward basic and acidic residues: residues 954–993, 1000–1010, and 1020–1058; these read IDSK…ETRW, NRREEVNDRPV, and VLRD…KKDL. A coiled-coil region spans residues 1020-1046; the sequence is VLRDMKEEREQRKEKEGEKAEKVTEKV. The span at 1059-1081 shows a compositional bias: pro residues; the sequence is PPPPPPPQPPAPIQPQSVPPPIQ. The segment covering 1089 to 1100 has biased composition (polar residues); the sequence is STETATLAQKPS. A Glycyl lysine isopeptide (Lys-Gly) (interchain with G-Cter in SUMO2) cross-link involves residue Lys1133. Composition is skewed to basic and acidic residues over residues 1143-1163, 1170-1180, 1214-1230, and 1237-1248; these read SKDL…KKES, YWKEARERDWF, HTRD…RAEH, and RQREESETRSES. Disordered regions lie at residues 1143 to 1647, 1670 to 1785, 1905 to 1991, 2005 to 2164, 2218 to 2238, 2257 to 2290, 2317 to 2341, and 2668 to 2701; these read SKDL…DALS, EDPQ…SAPV, APAS…TAEL, ISKK…VSEM, LPNT…SLTS, WENS…GPST, GAGT…NICK, and DIKP…QSSK. Phosphoserine is present on residues Ser1242, Ser1246, Ser1248, Ser1249, and Ser1263. 4 stretches are compositionally biased toward basic and acidic residues: residues 1261 to 1297, 1305 to 1330, 1381 to 1418, and 1429 to 1446; these read RGSE…ENKK, FKPD…DKAK, EVPK…PARE, and PRQD…REAA. A phosphothreonine mark is found at Thr1265 and Thr1267. 2 stretches are compositionally biased toward polar residues: residues 1457–1469 and 1477–1491; these read TNGT…QEPV and GNKT…SSDQ. The span at 1505–1517 shows a compositional bias: basic and acidic residues; sequence FNERRERDEKKNA. Phosphoserine is present on Ser1544. Composition is skewed to basic and acidic residues over residues 1620–1634 and 1692–1704; these read NSKD…DPKP and RLQD…KEEQ. Residues 1682–1717 are a coiled coil; the sequence is TEVVSKKQQKRLQDEERRKKEEQVIQVWNKKNANEK. The segment covering 1742-1785 has biased composition (low complexity); it reads SSASVPPLASAPLPPSTSASVPASTSAPLPATLTPVPASTSAPV. The span at 1913 to 1929 shows a compositional bias: pro residues; sequence APAPTPVSAPNPAPPAP. Positions 1943 to 1952 are enriched in low complexity; that stretch reads PLQTTSQSSK. Residue Thr1965 is modified to Phosphothreonine. A compositionally biased stretch (polar residues) spans 1976 to 1986; the sequence is KSIQTPQSHGT. 2 positions are modified to phosphoserine: Ser1983 and Ser2013. The span at 2019-2035 shows a compositional bias: polar residues; sequence SVSAWNKPLTSFGSAPS. Residues 2075-2088 are compositionally biased toward basic and acidic residues; the sequence is KSADKIPEPKEQRQ. Ser2105 is subject to Phosphoserine. A compositionally biased stretch (basic and acidic residues) spans 2108–2132; that stretch reads ENKEHKPGPIGKERSLKNRKVKDAQ. Ser2143 carries the post-translational modification Phosphoserine. Positions 2257 to 2267 are enriched in basic and acidic residues; sequence WENSPNVREKG. Ser2260 carries the post-translational modification Phosphoserine. Positions 2269 to 2290 are enriched in polar residues; it reads PVTSTAPPIATGVSSSASGPST. Residues 2320 to 2334 show a composition bias toward low complexity; sequence TYTTSSLSTKSTTTS. Phosphothreonine occurs at positions 2673 and 2682. Residues 2679–2701 show a composition bias toward polar residues; that stretch reads RSTTPTSSPFRATSTSPNSQSSK. Ser2686 and Ser2694 each carry phosphoserine. Arg2814 bears the Omega-N-methylarginine mark. At Arg2823 the chain carries Asymmetric dimethylarginine; alternate. Omega-N-methylarginine; alternate is present on Arg2823. A compositionally biased stretch (polar residues) spans 2824–2833; it reads FFSEQQQSKQ. Residues 2824–2896 form a disordered region; sequence FFSEQQQSKQ…QAIKTEETKS (73 aa).

In terms of tissue distribution, overexpressed in bladder cancer.

It localises to the cytoplasm. Its subcellular location is the stress granule. In terms of biological role, required for efficient formation of stress granules. The protein is Protein PRRC2C of Homo sapiens (Human).